Reading from the N-terminus, the 379-residue chain is Cytochrome b (379 aa).

A run of 4 helical transmembrane segments spans residues 33–53 (FGSL…FLAM), 77–98 (WLIR…FIHV), 113–133 (WNIG…GYVL), and 178–198 (FFAF…VHLL). The heme b site is built by His83 and His97. His182 and His196 together coordinate heme b. Position 201 (His201) interacts with a ubiquinone. A run of 4 helical transmembrane segments spans residues 226–246 (IKDL…ALFF), 288–308 (LGGV…PLLN), 320–340 (ITQT…WIGG), and 347–367 (FTTI…IIMP).

This sequence belongs to the cytochrome b family. As to quaternary structure, the cytochrome bc1 complex contains 11 subunits: 3 respiratory subunits (MT-CYB, CYC1 and UQCRFS1), 2 core proteins (UQCRC1 and UQCRC2) and 6 low-molecular weight proteins (UQCRH/QCR6, UQCRB/QCR7, UQCRQ/QCR8, UQCR10/QCR9, UQCR11/QCR10 and a cleavage product of UQCRFS1). This cytochrome bc1 complex then forms a dimer. It depends on heme b as a cofactor.

The protein resides in the mitochondrion inner membrane. Component of the ubiquinol-cytochrome c reductase complex (complex III or cytochrome b-c1 complex) that is part of the mitochondrial respiratory chain. The b-c1 complex mediates electron transfer from ubiquinol to cytochrome c. Contributes to the generation of a proton gradient across the mitochondrial membrane that is then used for ATP synthesis. The polypeptide is Cytochrome b (MT-CYB) (Deltamys kempi (Kemp's grass mouse)).